A 157-amino-acid chain; its full sequence is Putative pre-16S rRNA nuclease (157 aa).

Belongs to the YqgF nuclease family.

It localises to the cytoplasm. Its function is as follows. Could be a nuclease involved in processing of the 5'-end of pre-16S rRNA. The protein is Putative pre-16S rRNA nuclease of Parasynechococcus marenigrum (strain WH8102).